The chain runs to 233 residues: Transcriptional regulatory protein PrrA (233 aa).

One can recognise a Response regulatory domain in the interval 9–123 (RVLVVDDDSD…ELVARVKALL (115 aa)). Position 58 is a 4-aspartylphosphate (Asp-58). A DNA-binding region (ompR/PhoB-type) is located at residues 134 to 232 (SETIAVGPLE…VRGVGFVLRM (99 aa)).

Post-translationally, phosphorylated by PrrB at Asp-58.

The protein resides in the cytoplasm. Member of the two-component regulatory system PrrB/PrrA that is involved specifically in early intracellular multiplication of Mycobacterium and is essential for its viability. Upon phosphorylation by PrrB, functions as a transcription regulator by direct binding to promoter regions of target genes to positively regulate their expression. Autoregulates its own expression. The polypeptide is Transcriptional regulatory protein PrrA (prrA) (Mycobacterium leprae (strain TN)).